Here is a 69-residue protein sequence, read N- to C-terminus: Protein translocase subunit SecE (69 aa).

A helical transmembrane segment spans residues 43-63; that stretch reads VAGAGILVIGFVGFLIYVLLT.

The protein belongs to the SecE/SEC61-gamma family. In terms of assembly, component of the Sec protein translocase complex. Heterotrimer consisting of SecY (alpha), SecG (beta) and SecE (gamma) subunits. The heterotrimers can form oligomers, although 1 heterotrimer is thought to be able to translocate proteins. Interacts with the ribosome. May interact with SecDF, and other proteins may be involved.

Its subcellular location is the cell membrane. In terms of biological role, essential subunit of the Sec protein translocation channel SecYEG. Clamps together the 2 halves of SecY. May contact the channel plug during translocation. The chain is Protein translocase subunit SecE from Methanococcoides burtonii (strain DSM 6242 / NBRC 107633 / OCM 468 / ACE-M).